The primary structure comprises 102 residues: NADH-quinone oxidoreductase subunit K (102 aa).

Transmembrane regions (helical) follow at residues 2 to 22 (LDFY…GVIL), 26 to 46 (IFTI…IFAT), and 58 to 78 (VIVM…LALI).

It belongs to the complex I subunit 4L family. As to quaternary structure, NDH-1 is composed of 14 different subunits. Subunits NuoA, H, J, K, L, M, N constitute the membrane sector of the complex.

The protein localises to the cell inner membrane. It carries out the reaction a quinone + NADH + 5 H(+)(in) = a quinol + NAD(+) + 4 H(+)(out). NDH-1 shuttles electrons from NADH, via FMN and iron-sulfur (Fe-S) centers, to quinones in the respiratory chain. The immediate electron acceptor for the enzyme in this species is believed to be ubiquinone. Couples the redox reaction to proton translocation (for every two electrons transferred, four hydrogen ions are translocated across the cytoplasmic membrane), and thus conserves the redox energy in a proton gradient. The protein is NADH-quinone oxidoreductase subunit K of Campylobacter fetus subsp. fetus (strain 82-40).